We begin with the raw amino-acid sequence, 154 residues long: Endoribonuclease YbeY (154 aa).

Residues His-113, His-117, and His-123 each contribute to the Zn(2+) site.

This sequence belongs to the endoribonuclease YbeY family. Requires Zn(2+) as cofactor.

It is found in the cytoplasm. In terms of biological role, single strand-specific metallo-endoribonuclease involved in late-stage 70S ribosome quality control and in maturation of the 3' terminus of the 16S rRNA. This Vibrio cholerae serotype O1 (strain ATCC 39315 / El Tor Inaba N16961) protein is Endoribonuclease YbeY.